A 303-amino-acid chain; its full sequence is Uricase (303 aa).

Ala-2 is subject to N-acetylalanine. Lys-10 and Lys-23 each carry N6-acetyllysine; alternate. Lys-10 and Lys-23 each carry N6-succinyllysine; alternate. Lys-23 (charge relay system) is an active-site residue. Residues Lys-27 and Lys-36 each carry the N6-acetyllysine modification. 2 positions are modified to phosphoserine: Ser-39 and Ser-63. Thr-68 acts as the Charge relay system in catalysis. Urate-binding residues include Thr-68 and Asp-69. N6-acetyllysine occurs at positions 118, 122, and 164. Phe-170 serves as a coordination point for urate. Residues Lys-175 and Lys-185 each carry the N6-acetyllysine modification. Arg-187 is a urate binding site. Lys-220 and Lys-227 each carry N6-acetyllysine; alternate. N6-succinyllysine; alternate is present on residues Lys-220 and Lys-227. Phosphoserine is present on Ser-231. Urate is bound by residues Val-234, Gln-235, and Asn-261. Catalysis depends on His-263, which acts as the Charge relay system. Lys-277 carries the post-translational modification N6-acetyllysine. Phosphotyrosine is present on Tyr-288. The Microbody targeting signal motif lies at Ser-301–Leu-303.

It belongs to the uricase family. Post-translationally, acetylation of Lys-118, Lys-164 and Lys-290 is observed in liver mitochondria from fasted mice but not from fed mice. May be deacetylated by Sirt5; however it is unclear whether Sirt5 mediates deacetylation or desuccinylation of Uox; additional evidence is required to validate these results.

The protein resides in the peroxisome. It is found in the mitochondrion. The catalysed reaction is urate + O2 + H2O = 5-hydroxyisourate + H2O2. It participates in purine metabolism; urate degradation; (S)-allantoin from urate: step 1/3. Its function is as follows. Catalyzes the oxidation of uric acid to 5-hydroxyisourate, which is further processed to form (S)-allantoin. This is Uricase (Uox) from Mus musculus (Mouse).